The following is a 112-amino-acid chain: Large ribosomal subunit protein uL22 (112 aa).

This sequence belongs to the universal ribosomal protein uL22 family. As to quaternary structure, part of the 50S ribosomal subunit.

Functionally, this protein binds specifically to 23S rRNA; its binding is stimulated by other ribosomal proteins, e.g. L4, L17, and L20. It is important during the early stages of 50S assembly. It makes multiple contacts with different domains of the 23S rRNA in the assembled 50S subunit and ribosome. Its function is as follows. The globular domain of the protein is located near the polypeptide exit tunnel on the outside of the subunit, while an extended beta-hairpin is found that lines the wall of the exit tunnel in the center of the 70S ribosome. The protein is Large ribosomal subunit protein uL22 of Legionella pneumophila subsp. pneumophila (strain Philadelphia 1 / ATCC 33152 / DSM 7513).